Consider the following 233-residue polypeptide: MSDSEQTSSGTASSGSKMKDFNQRFRDLHKMRQKARKENHAQVVEEDRRKKLPKNFEAKKERDQWQVKELQDRKEAEDKGLDYERVRSLEMSADVTEKLEQKRKRKKNPDQGFASYEDMTLRQHTRLTAALDPDLESYKKMKECVGGDQFYPTADTLIHGNHYPTTSAMDRLVKDVHGQVKRREQYHRRRLYDPDAPIDYINEKNKKFNKKLDKYYGKYTEDIKDDLERGTAI.

Over residues 1-16 (MSDSEQTSSGTASSGS) the composition is skewed to polar residues. Disordered stretches follow at residues 1-80 (MSDS…EDKG) and 95-119 (VTEK…YEDM). Residues 17-80 (KMKDFNQRFR…QDRKEAEDKG (64 aa)) are compositionally biased toward basic and acidic residues. A coiled-coil region spans residues 18 to 77 (MKDFNQRFRDLHKMRQKARKENHAQVVEEDRRKKLPKNFEAKKERDQWQVKELQDRKEAE).

It belongs to the SYF2 family. May be part of a spliceosome complex.

It is found in the nucleus. Functionally, may be involved in pre-mRNA splicing. This is Pre-mRNA-splicing factor syf-2 from Caenorhabditis briggsae.